Consider the following 455-residue polypeptide: Periplasmic pH-dependent serine endoprotease DegQ (455 aa).

An N-terminal signal peptide occupies residues M1–A27. Substrate contacts are provided by residues E59, H109, D139, G212, G212–S214, T230–A234, and L269–G273. Residues H109 and D139 each act as charge relay system in the active site. S214 (charge relay system) is an active-site residue. PDZ domains lie at L258–G349 and E355–N447.

The protein belongs to the peptidase S1C family. As to quaternary structure, degQ can reversibly switch between different oligomeric forms that represent inactive (6-mer) and active (12- and 24-mer) protease states. Substrate binding triggers the conversion of the resting DegQ trimer and hexamer into catalytically active 12- and 24-mers. The conversion of 6-mer (DegQ6) into 12-mer (DegQ12) or 24-mer (DegQ24) is crucial in regulating protease activity.

The protein localises to the periplasm. The catalysed reaction is Acts on substrates that are at least partially unfolded. The cleavage site P1 residue is normally between a pair of hydrophobic residues, such as Val-|-Val.. With respect to regulation, inhibited by diisopropylfluorophosphate (DFP). Its function is as follows. DegQ could degrade transiently denatured and unfolded proteins which accumulate in the periplasm following stress conditions. DegQ is efficient with Val-Xaa and Ile-Xaa peptide bonds, suggesting a preference for a beta-branched side chain amino acids. Only unfolded proteins devoid of disulfide bonds appear capable to be cleaved, thereby preventing non-specific proteolysis of folded proteins. DegQ can substitute for the periplasmic protease DegP. The chain is Periplasmic pH-dependent serine endoprotease DegQ (degQ) from Escherichia coli (strain K12).